Reading from the N-terminus, the 338-residue chain is 3-keto-steroid reductase erg27 (338 aa).

NADP(+) is bound by residues Leu16, Thr44, Lys50, and Asp75. Active-site proton donor residues include Ser180 and Tyr203. The NADP(+) site is built by Tyr203, Lys207, and Thr236. Lys207 acts as the Lowers pKa of active site Tyr in catalysis.

The protein belongs to the short-chain dehydrogenases/reductases (SDR) family. ERG27 subfamily. As to quaternary structure, heterotetramer of erg25, erg26, erg27 and erg28. Erg28 acts as a scaffold to tether erg27 and other 4,4-demethylation-related enzymes, forming a demethylation enzyme complex, in the endoplasmic reticulum.

The catalysed reaction is 3-dehydro-4alpha-methylzymosterol + NADPH + H(+) = 4alpha-methylzymosterol + NADP(+). It functions in the pathway steroid biosynthesis; zymosterol biosynthesis; zymosterol from lanosterol: step 5/6. Its pathway is steroid metabolism; ergosterol biosynthesis. 3-keto-steroid reductase; part of the third module of ergosterol biosynthesis pathway that includes by the late steps of the pathway. Erg27 is a catalytic component of the C-4 demethylation complex that catalyze the reduction of the keto group on the C-3. The third module or late pathway involves the ergosterol synthesis itself through consecutive reactions that mainly occur in the endoplasmic reticulum (ER) membrane. Firstly, the squalene synthase erg9 catalyzes the condensation of 2 farnesyl pyrophosphate moieties to form squalene, which is the precursor of all steroids. Secondly, squalene is converted into lanosterol by the consecutive action of the squalene epoxidase erg1 and the lanosterol synthase erg7. The lanosterol 14-alpha-demethylase erg11/cyp1 catalyzes C14-demethylation of lanosterol to produce 4,4'-dimethyl cholesta-8,14,24-triene-3-beta-ol. In the next steps, a complex process involving various demethylation, reduction and desaturation reactions catalyzed by the C-14 reductase erg24 and the C-4 demethylation complex erg25-erg26-erg27 leads to the production of zymosterol. Erg28 likely functions in the C-4 demethylation complex reaction by tethering erg26 and Erg27 to the endoplasmic reticulum or to facilitate interaction between these proteins. Then, the sterol 24-C-methyltransferase erg6 catalyzes the methyl transfer from S-adenosyl-methionine to the C-24 of zymosterol to form fecosterol. The C-8 sterol isomerase erg2 catalyzes the reaction which results in unsaturation at C-7 in the B ring of sterols and thus converts fecosterol to episterol. The sterol-C5-desaturases erg31 and erg32 then catalyze the introduction of a C-5 double bond in the B ring to produce 5-dehydroepisterol. The C-22 sterol desaturase erg5 further converts 5-dehydroepisterol into ergosta-5,7,22,24(28)-tetraen-3beta-ol by forming the C-22(23) double bond in the sterol side chain. Finally, ergosta-5,7,22,24(28)-tetraen-3beta-ol is substrate of the C-24(28) sterol reductase erg4 to produce ergosterol. In the genus Schizosaccharomyces, a second route exists between lanosterol and fecosterol, via the methylation of lanosterol to eburicol by erg6, followed by C14-demethylation by erg11/cyp1 and C4-demethylation by the demethylation complex erg25-erg26-erg27. This is 3-keto-steroid reductase erg27 from Schizosaccharomyces pombe (strain 972 / ATCC 24843) (Fission yeast).